Here is a 489-residue protein sequence, read N- to C-terminus: Rhamnulokinase (489 aa).

13–17 (ASSGR) lines the ATP pocket. The cysteines at positions 68 and 222 are disulfide-linked. Residues Gly-83 and 236 to 238 (HDT) each bind substrate. Asp-237 acts as the Proton acceptor in catalysis. Position 259 (Thr-259) interacts with ATP. A substrate-binding site is contributed by Asn-296. Gln-304 lines the ATP pocket. Cys-353 and Cys-370 are disulfide-bonded. Gly-402 contacts ATP. Residues Cys-413 and Cys-417 are joined by a disulfide bond.

It belongs to the rhamnulokinase family. Monomer. Mg(2+) is required as a cofactor.

It carries out the reaction L-rhamnulose + ATP = L-rhamnulose 1-phosphate + ADP + H(+). It participates in carbohydrate degradation; L-rhamnose degradation; glycerone phosphate from L-rhamnose: step 2/3. In terms of biological role, involved in the catabolism of L-rhamnose (6-deoxy-L-mannose). Catalyzes the transfer of the gamma-phosphate group from ATP to the 1-hydroxyl group of L-rhamnulose to yield L-rhamnulose 1-phosphate. The protein is Rhamnulokinase of Escherichia coli (strain SE11).